Reading from the N-terminus, the 105-residue chain is Large ribosomal subunit protein uL24 (105 aa).

It belongs to the universal ribosomal protein uL24 family. Part of the 50S ribosomal subunit.

One of two assembly initiator proteins, it binds directly to the 5'-end of the 23S rRNA, where it nucleates assembly of the 50S subunit. Functionally, one of the proteins that surrounds the polypeptide exit tunnel on the outside of the subunit. This chain is Large ribosomal subunit protein uL24, found in Psychrobacter arcticus (strain DSM 17307 / VKM B-2377 / 273-4).